The following is a 59-amino-acid chain: Alpha-conotoxin CIA (59 aa).

The N-terminal stretch at 1 to 16 is a signal peptide; the sequence is MFTVFLLVVLTITVVS. Residues 17–42 constitute a propeptide that is removed on maturation; that stretch reads FPSDRASDGRDDEAKDERSDMYKSKR. 2 disulfide bridges follow: Cys-46–Cys-51 and Cys-47–Cys-57. A Cysteine amide modification is found at Cys-57.

Belongs to the conotoxin A superfamily. In terms of tissue distribution, expressed by the venom duct.

The protein resides in the secreted. In terms of biological role, alpha-conotoxins act on postsynaptic membranes, they bind to the nicotinic acetylcholine receptors (nAChR) and thus inhibit them. This toxin blocks the rat muscle nAChRs alpha-1-beta-1-gamma-delta (CHRNA1-CHRNB1-CHRNG-CHRND) (IC(50)=5.7 nM) and the rat neuronal nAChR alpha-3-beta-2/CHRNA3-CHRNB2 (IC(50)=2060 nM). In vivo, intramuscular injection into zebrafish produces rapid flaccid paralysis. This Conus catus (Cat cone) protein is Alpha-conotoxin CIA.